We begin with the raw amino-acid sequence, 729 residues long: Phosphoribosylformylglycinamidine synthase subunit PurL (729 aa).

Residue His54 is part of the active site. Residues Tyr57 and Lys96 each contribute to the ATP site. A Mg(2+)-binding site is contributed by Glu98. Residues 99 to 102 (SHNH) and Arg121 contribute to the substrate site. His100 acts as the Proton acceptor in catalysis. Asp122 provides a ligand contact to Mg(2+). Substrate is bound at residue Gln245. Mg(2+) is bound at residue Asp273. Position 317–319 (317–319 (ETQ)) interacts with substrate. The ATP site is built by Asp495 and Gly532. Residue Asn533 participates in Mg(2+) binding. Residue Ser535 coordinates substrate.

Belongs to the FGAMS family. Monomer. Part of the FGAM synthase complex composed of 1 PurL, 1 PurQ and 2 PurS subunits.

Its subcellular location is the cytoplasm. The catalysed reaction is N(2)-formyl-N(1)-(5-phospho-beta-D-ribosyl)glycinamide + L-glutamine + ATP + H2O = 2-formamido-N(1)-(5-O-phospho-beta-D-ribosyl)acetamidine + L-glutamate + ADP + phosphate + H(+). It participates in purine metabolism; IMP biosynthesis via de novo pathway; 5-amino-1-(5-phospho-D-ribosyl)imidazole from N(2)-formyl-N(1)-(5-phospho-D-ribosyl)glycinamide: step 1/2. In terms of biological role, part of the phosphoribosylformylglycinamidine synthase complex involved in the purines biosynthetic pathway. Catalyzes the ATP-dependent conversion of formylglycinamide ribonucleotide (FGAR) and glutamine to yield formylglycinamidine ribonucleotide (FGAM) and glutamate. The FGAM synthase complex is composed of three subunits. PurQ produces an ammonia molecule by converting glutamine to glutamate. PurL transfers the ammonia molecule to FGAR to form FGAM in an ATP-dependent manner. PurS interacts with PurQ and PurL and is thought to assist in the transfer of the ammonia molecule from PurQ to PurL. This chain is Phosphoribosylformylglycinamidine synthase subunit PurL, found in Staphylococcus haemolyticus (strain JCSC1435).